A 42-amino-acid chain; its full sequence is Iota-conotoxin-like R11.16 (42 aa).

4 disulfide bridges follow: Cys-5-Cys-19, Cys-12-Cys-22, Cys-18-Cys-27, and Cys-21-Cys-36.

The protein belongs to the conotoxin I1 superfamily. As to expression, expressed by the venom duct.

The protein resides in the secreted. Functionally, iota-conotoxins bind to voltage-gated sodium channels (Nav) and act as agonists by shifting the voltage-dependence of activation to more hyperpolarized levels. Produces general excitatory symptoms. The protein is Iota-conotoxin-like R11.16 of Conus radiatus (Rayed cone).